A 326-amino-acid chain; its full sequence is tRNA uridine(34) hydroxylase (326 aa).

In terms of domain architecture, Rhodanese spans 122–218 (EENRCLVLDV…YGQAVGTGKW (97 aa)). Cys178 acts as the Cysteine persulfide intermediate in catalysis.

It belongs to the TrhO family.

It carries out the reaction uridine(34) in tRNA + AH2 + O2 = 5-hydroxyuridine(34) in tRNA + A + H2O. Its function is as follows. Catalyzes oxygen-dependent 5-hydroxyuridine (ho5U) modification at position 34 in tRNAs. This is tRNA uridine(34) hydroxylase from Chlamydia abortus (strain DSM 27085 / S26/3) (Chlamydophila abortus).